A 651-amino-acid polypeptide reads, in one-letter code: p-hydroxybenzoic acid efflux pump subunit AaeB (651 aa).

The next 11 helical transmembrane spans lie at F11–L31, A41–I61, L67–I87, V91–V111, F119–L139, E150–I170, L368–V388, F405–P425, Q429–V449, L460–F480, and L481–I501.

Belongs to the aromatic acid exporter ArAE (TC 2.A.85) family.

The protein localises to the cell inner membrane. Its function is as follows. Forms an efflux pump with AaeA. Could function as a metabolic relief valve, allowing to eliminate certain compounds when they accumulate to high levels in the cell. The sequence is that of p-hydroxybenzoic acid efflux pump subunit AaeB from Yersinia enterocolitica serotype O:8 / biotype 1B (strain NCTC 13174 / 8081).